Here is a 194-residue protein sequence, read N- to C-terminus: Large ribosomal subunit protein bL17 (194 aa).

Residues 126–194 form a disordered region; it reads AEPKQTKART…SPEQTNKQEE (69 aa). Over residues 131-140 the composition is skewed to basic residues; that stretch reads TKARTRRGKG. Composition is skewed to polar residues over residues 144–161 and 181–194; these read ATTTVSSEKTQPNTQDMA and LDTQSPEQTNKQEE.

Belongs to the bacterial ribosomal protein bL17 family. Part of the 50S ribosomal subunit. Contacts protein L32.

The protein is Large ribosomal subunit protein bL17 of Amoebophilus asiaticus (strain 5a2).